The primary structure comprises 180 residues: UPF0227 protein Ent638_1623 (180 aa).

The protein belongs to the UPF0227 family.

The protein is UPF0227 protein Ent638_1623 of Enterobacter sp. (strain 638).